The primary structure comprises 317 residues: Ribosomal protein L11 methyltransferase (317 aa).

S-adenosyl-L-methionine is bound by residues threonine 139, glycine 162, aspartate 184, and asparagine 226. The segment at 274–297 (EHVATRPDPASPGGDRRAGRGDAG) is disordered.

It belongs to the methyltransferase superfamily. PrmA family.

Its subcellular location is the cytoplasm. The enzyme catalyses L-lysyl-[protein] + 3 S-adenosyl-L-methionine = N(6),N(6),N(6)-trimethyl-L-lysyl-[protein] + 3 S-adenosyl-L-homocysteine + 3 H(+). Functionally, methylates ribosomal protein L11. The sequence is that of Ribosomal protein L11 methyltransferase from Sorangium cellulosum (strain So ce56) (Polyangium cellulosum (strain So ce56)).